Here is a 475-residue protein sequence, read N- to C-terminus: Aspartyl/glutamyl-tRNA(Asn/Gln) amidotransferase subunit B (475 aa).

Belongs to the GatB/GatE family. GatB subfamily. As to quaternary structure, heterotrimer of A, B and C subunits.

It catalyses the reaction L-glutamyl-tRNA(Gln) + L-glutamine + ATP + H2O = L-glutaminyl-tRNA(Gln) + L-glutamate + ADP + phosphate + H(+). The enzyme catalyses L-aspartyl-tRNA(Asn) + L-glutamine + ATP + H2O = L-asparaginyl-tRNA(Asn) + L-glutamate + ADP + phosphate + 2 H(+). Functionally, allows the formation of correctly charged Asn-tRNA(Asn) or Gln-tRNA(Gln) through the transamidation of misacylated Asp-tRNA(Asn) or Glu-tRNA(Gln) in organisms which lack either or both of asparaginyl-tRNA or glutaminyl-tRNA synthetases. The reaction takes place in the presence of glutamine and ATP through an activated phospho-Asp-tRNA(Asn) or phospho-Glu-tRNA(Gln). The sequence is that of Aspartyl/glutamyl-tRNA(Asn/Gln) amidotransferase subunit B from Caldanaerobacter subterraneus subsp. tengcongensis (strain DSM 15242 / JCM 11007 / NBRC 100824 / MB4) (Thermoanaerobacter tengcongensis).